Consider the following 326-residue polypeptide: GATA zinc finger domain-containing protein 21 (326 aa).

Disordered stretches follow at residues 1–102 (MFRN…NNNN) and 145–238 (QNQS…TPER). Composition is skewed to low complexity over residues 17–102 (NTNL…NNNN) and 148–164 (SSSS…GSSA). Polar residues predominate over residues 165 to 189 (LNSINNNNYSPTTSSLNRVRNQYNQ). Residues 193–218 (DEEDDDYDNGAEDGFDYDGDDNEDGS) show a composition bias toward acidic residues. Residues 239–266 (CSNCKITHSSYWRRITVNGQKLDFCNAC) form a GATA-type zinc finger. The tract at residues 277–326 (IKESKQRHSIQNIMNQNQEEEEEEREEEEEEEEEEDEEFETLEEEEEDDE) is disordered. A compositionally biased stretch (acidic residues) spans 294–326 (QEEEEEEREEEEEEEEEEDEEFETLEEEEEDDE).

The protein is GATA zinc finger domain-containing protein 21 (gtaU) of Dictyostelium discoideum (Social amoeba).